A 400-amino-acid chain; its full sequence is Glycerol-3-phosphate dehydrogenase [NAD(+)] 1, chloroplastic (400 aa).

A chloroplast-targeting transit peptide spans 1–32 (MRFRSFFFSSSIFSLSHSRSPSLSSSRFSSLS). NAD(+) contacts are provided by residues 61–66 (GSGNWG), Phe-92, Phe-149, Lys-172, and Ala-205. Lys-172 serves as a coordination point for substrate. Lys-257 (proton acceptor) is an active-site residue. NAD(+) contacts are provided by Arg-321, Lys-350, and Gln-352. Position 321–322 (321–322 (RN)) interacts with substrate.

This sequence belongs to the NAD-dependent glycerol-3-phosphate dehydrogenase family. Expressed in young seedlings, flowers and siliques. Expressed at low levels in roots.

The protein localises to the plastid. It localises to the chloroplast. It catalyses the reaction sn-glycerol 3-phosphate + NAD(+) = dihydroxyacetone phosphate + NADH + H(+). It functions in the pathway membrane lipid metabolism; glycerophospholipid metabolism. In terms of biological role, involved in glycerolipid metabolism. The chain is Glycerol-3-phosphate dehydrogenase [NAD(+)] 1, chloroplastic (DHAPRD) from Arabidopsis thaliana (Mouse-ear cress).